The chain runs to 168 residues: Dual-action ribosomal maturation protein DarP (168 aa).

This sequence belongs to the DarP family.

Its subcellular location is the cytoplasm. In terms of biological role, member of a network of 50S ribosomal subunit biogenesis factors which assembles along the 30S-50S interface, preventing incorrect 23S rRNA structures from forming. Promotes peptidyl transferase center (PTC) maturation. In Neisseria meningitidis serogroup B (strain ATCC BAA-335 / MC58), this protein is Dual-action ribosomal maturation protein DarP.